Here is a 34-residue protein sequence, read N- to C-terminus: U2-theraphotoxin-Bs1a (34 aa).

Disulfide bonds link cysteine 2–cysteine 16, cysteine 9–cysteine 21, and cysteine 15–cysteine 28.

Expressed by the venom gland.

The protein localises to the secreted. The polypeptide is U2-theraphotoxin-Bs1a (Brachypelma smithi (Mexican red knee tarantula)).